The following is a 381-amino-acid chain: ADP,ATP carrier protein 1, mitochondrial (381 aa).

The transit peptide at 1 to 70 directs the protein to the mitochondrion; it reads MVDQVQHPTI…ATTASPVFVQ (70 aa). Solcar repeat units lie at residues 78 to 171, 183 to 276, and 284 to 370; these read TNFA…FKRL, KWFA…VKPV, and DSFF…LQLI. The next 5 membrane-spanning stretches (helical) occupy residues 80 to 107, 148 to 172, 181 to 201, 252 to 273, and 287 to 307; these read FALD…VKLL, TANV…KRLF, YWKW…SSLL, FNIS…YDSV, and FASF…SYPI. 2 residues coordinate ADP: Arg-153 and Lys-165. ADP is bound at residue Arg-311. Residues 311–316 are important for transport activity; the sequence is RRRMMM. A Nucleotide carrier signature motif motif is present at residues 311-316; it reads RRRMMM. Residues 347–367 form a helical membrane-spanning segment; it reads AGANILRAVAGAGVLSGYDKL.

This sequence belongs to the mitochondrial carrier (TC 2.A.29) family. As to quaternary structure, monomer.

It is found in the mitochondrion inner membrane. The enzyme catalyses ADP(in) + ATP(out) = ADP(out) + ATP(in). Its activity is regulated as follows. The matrix-open state (m-state) is inhibited by the membrane-permeable bongkrekic acid (BKA). The cytoplasmic-open state (c-state) is inhibited by the membrane-impermeable toxic inhibitor carboxyatractyloside (CATR). ADP:ATP antiporter that mediates import of ADP into the mitochondrial matrix for ATP synthesis, and export of ATP out to fuel the cell. Cycles between the cytoplasmic-open state (c-state) and the matrix-open state (m-state): operates by the alternating access mechanism with a single substrate-binding site intermittently exposed to either the cytosolic (c-state) or matrix (m-state) side of the inner mitochondrial membrane. In Arabidopsis thaliana (Mouse-ear cress), this protein is ADP,ATP carrier protein 1, mitochondrial (AAC1).